The sequence spans 158 residues: Succinate dehydrogenase [ubiquinone] cytochrome b small subunit, mitochondrial (158 aa).

A mitochondrion-targeting transit peptide spans 1 to 55 (MALWRLSVLCGAREGRALFLRTPVVRPALVSAFLQDRPAQGWCGTQHIHLSPSHH). Over 56 to 62 (SGSKAAS) the chain is Mitochondrial matrix. Residues 63–84 (LHWTGERVVSVLLLGLIPAAYL) traverse the membrane as a helical segment. Over 85-89 (NPCSA) the chain is Mitochondrial intermembrane. Residues 90–110 (MDYSLAATLTLHSHWGIGQVV) traverse the membrane as a helical segment. His-101 is a heme b binding site. Over 111 to 119 (TDYVHGDAV) the chain is Mitochondrial matrix. Tyr-113 is an a ubiquinone binding site. A helical transmembrane segment spans residues 120–141 (QKAAKTGLLVLSAFTFAGLCYF). Residues 142–158 (NYHDVGICKAVAMLWKL) are Mitochondrial intermembrane-facing.

This sequence belongs to the CybS family. Component of complex II composed of four subunits: the flavoprotein (FP) SDHA, iron-sulfur protein (IP) SDHB, and a cytochrome b560 composed of SDHC and SDHD.

The protein localises to the mitochondrion inner membrane. The protein operates within carbohydrate metabolism; tricarboxylic acid cycle. Functionally, membrane-anchoring subunit of succinate dehydrogenase (SDH) that is involved in complex II of the mitochondrial electron transport chain and is responsible for transferring electrons from succinate to ubiquinone (coenzyme Q). SDH also oxidizes malate to the non-canonical enol form of oxaloacetate, enol-oxaloacetate. Enol-oxaloacetate, which is a potent inhibitor of the succinate dehydrogenase activity, is further isomerized into keto-oxaloacetate. This is Succinate dehydrogenase [ubiquinone] cytochrome b small subunit, mitochondrial (SDHD) from Bos taurus (Bovine).